We begin with the raw amino-acid sequence, 249 residues long: Acetylglutamate kinase (249 aa).

Residues 38–39 (GG), Arg60, and Asn147 each bind substrate.

The protein belongs to the acetylglutamate kinase family. ArgB subfamily.

Its subcellular location is the cytoplasm. The enzyme catalyses N-acetyl-L-glutamate + ATP = N-acetyl-L-glutamyl 5-phosphate + ADP. It participates in amino-acid biosynthesis; L-arginine biosynthesis; N(2)-acetyl-L-ornithine from L-glutamate: step 2/4. Its function is as follows. Catalyzes the ATP-dependent phosphorylation of N-acetyl-L-glutamate. In Deinococcus radiodurans (strain ATCC 13939 / DSM 20539 / JCM 16871 / CCUG 27074 / LMG 4051 / NBRC 15346 / NCIMB 9279 / VKM B-1422 / R1), this protein is Acetylglutamate kinase.